The chain runs to 291 residues: ATP synthase gamma chain (291 aa).

This sequence belongs to the ATPase gamma chain family. In terms of assembly, F-type ATPases have 2 components, CF(1) - the catalytic core - and CF(0) - the membrane proton channel. CF(1) has five subunits: alpha(3), beta(3), gamma(1), delta(1), epsilon(1). CF(0) has three main subunits: a, b and c.

Its subcellular location is the cell inner membrane. Produces ATP from ADP in the presence of a proton gradient across the membrane. The gamma chain is believed to be important in regulating ATPase activity and the flow of protons through the CF(0) complex. This Methylibium petroleiphilum (strain ATCC BAA-1232 / LMG 22953 / PM1) protein is ATP synthase gamma chain.